Consider the following 84-residue polypeptide: MAHKKGQGSTQNNRDSIGRRLGVKKFGGEFVRAGNIIIRQRGTATHAGNNVGMGKDHTIFALIDGFVKFERKDKDRKKVSVYPA.

This sequence belongs to the bacterial ribosomal protein bL27 family.

This chain is Large ribosomal subunit protein bL27, found in Campylobacter jejuni subsp. jejuni serotype O:6 (strain 81116 / NCTC 11828).